We begin with the raw amino-acid sequence, 160 residues long: SsrA-binding protein (160 aa).

The protein belongs to the SmpB family.

It is found in the cytoplasm. Required for rescue of stalled ribosomes mediated by trans-translation. Binds to transfer-messenger RNA (tmRNA), required for stable association of tmRNA with ribosomes. tmRNA and SmpB together mimic tRNA shape, replacing the anticodon stem-loop with SmpB. tmRNA is encoded by the ssrA gene; the 2 termini fold to resemble tRNA(Ala) and it encodes a 'tag peptide', a short internal open reading frame. During trans-translation Ala-aminoacylated tmRNA acts like a tRNA, entering the A-site of stalled ribosomes, displacing the stalled mRNA. The ribosome then switches to translate the ORF on the tmRNA; the nascent peptide is terminated with the 'tag peptide' encoded by the tmRNA and targeted for degradation. The ribosome is freed to recommence translation, which seems to be the essential function of trans-translation. This is SsrA-binding protein from Mannheimia succiniciproducens (strain KCTC 0769BP / MBEL55E).